Reading from the N-terminus, the 315-residue chain is Methionyl-tRNA formyltransferase (315 aa).

112–115 lines the (6S)-5,6,7,8-tetrahydrofolate pocket; that stretch reads SLLP.

This sequence belongs to the Fmt family.

The enzyme catalyses L-methionyl-tRNA(fMet) + (6R)-10-formyltetrahydrofolate = N-formyl-L-methionyl-tRNA(fMet) + (6S)-5,6,7,8-tetrahydrofolate + H(+). Attaches a formyl group to the free amino group of methionyl-tRNA(fMet). The formyl group appears to play a dual role in the initiator identity of N-formylmethionyl-tRNA by promoting its recognition by IF2 and preventing the misappropriation of this tRNA by the elongation apparatus. The chain is Methionyl-tRNA formyltransferase from Leptospira interrogans serogroup Icterohaemorrhagiae serovar copenhageni (strain Fiocruz L1-130).